A 453-amino-acid polypeptide reads, in one-letter code: tRNA-2-methylthio-N(6)-dimethylallyladenosine synthase (453 aa).

The region spanning 11–131 (KSFHVKSFGC…LPQLVADAAE (121 aa)) is the MTTase N-terminal domain. Cysteine 20, cysteine 56, cysteine 94, cysteine 167, cysteine 171, and cysteine 174 together coordinate [4Fe-4S] cluster. The Radical SAM core domain occupies 153–385 (RRQGPTAFLT…QALLNEQQHR (233 aa)). The TRAM domain maps to 388 to 449 (LATVGKRCEV…PNSLSGALVE (62 aa)).

It belongs to the methylthiotransferase family. MiaB subfamily. As to quaternary structure, monomer. Requires [4Fe-4S] cluster as cofactor.

It is found in the cytoplasm. It carries out the reaction N(6)-dimethylallyladenosine(37) in tRNA + (sulfur carrier)-SH + AH2 + 2 S-adenosyl-L-methionine = 2-methylsulfanyl-N(6)-dimethylallyladenosine(37) in tRNA + (sulfur carrier)-H + 5'-deoxyadenosine + L-methionine + A + S-adenosyl-L-homocysteine + 2 H(+). Functionally, catalyzes the methylthiolation of N6-(dimethylallyl)adenosine (i(6)A), leading to the formation of 2-methylthio-N6-(dimethylallyl)adenosine (ms(2)i(6)A) at position 37 in tRNAs that read codons beginning with uridine. The protein is tRNA-2-methylthio-N(6)-dimethylallyladenosine synthase of Rhizorhabdus wittichii (strain DSM 6014 / CCUG 31198 / JCM 15750 / NBRC 105917 / EY 4224 / RW1) (Sphingomonas wittichii).